The chain runs to 252 residues: tRNA (guanine-N(7)-)-methyltransferase (252 aa).

Positions 51, 76, 103, and 125 each coordinate S-adenosyl-L-methionine. Residue aspartate 125 is part of the active site. Substrate-binding positions include lysine 129, aspartate 159, and threonine 199–glutamate 202.

This sequence belongs to the class I-like SAM-binding methyltransferase superfamily. TrmB family.

It carries out the reaction guanosine(46) in tRNA + S-adenosyl-L-methionine = N(7)-methylguanosine(46) in tRNA + S-adenosyl-L-homocysteine. It participates in tRNA modification; N(7)-methylguanine-tRNA biosynthesis. Catalyzes the formation of N(7)-methylguanine at position 46 (m7G46) in tRNA. This Bacteroides thetaiotaomicron (strain ATCC 29148 / DSM 2079 / JCM 5827 / CCUG 10774 / NCTC 10582 / VPI-5482 / E50) protein is tRNA (guanine-N(7)-)-methyltransferase.